Reading from the N-terminus, the 487-residue chain is Neuronal immunoglobulin domain-containing protein rig-3 (487 aa).

The N-terminal stretch at 1–23 (MGRLLAKMLFPLAMCLFVSAVSA) is a signal peptide. Ig-like domains follow at residues 34–139 (PIVI…KTIK) and 247–354 (PEFE…PKVT). Disulfide bonds link cysteine 61-cysteine 124 and cysteine 271-cysteine 327. Aspartate 466 carries GPI-anchor amidated aspartate lipidation. Residues 467–487 (SASDSKFPLALATLFFVCLFI) constitute a propeptide, removed in mature form.

As to expression, expressed in the cholinergic motor neurons AS, VA and DA in the ventral nerve cord and in the mechanosensory ALM neurons in the midbody.

The protein localises to the cell projection. It is found in the axon. It localises to the synapse. The protein resides in the cell membrane. Cell surface protein which plays a role in the plasticity of cholinergic synapses at neuromuscular junctions and in the polarity of the mechanosensory neuron ALM, possibly by antagonizing Wnt signaling. The chain is Neuronal immunoglobulin domain-containing protein rig-3 from Caenorhabditis elegans.